Consider the following 740-residue polypeptide: Catalase-peroxidase (740 aa).

Residues 1 to 16 (MSENHDAIVTDAKTEE) show a composition bias toward basic and acidic residues. The tract at residues 1–38 (MSENHDAIVTDAKTEETDGCPVAHGRAPHPTQGGGNRQ) is disordered. The tryptophyl-tyrosyl-methioninium (Trp-Tyr) (with M-257) cross-link spans 108-231 (WHSAGTYRIS…LGAVQMGLIY (124 aa)). His109 serves as the catalytic Proton acceptor. Positions 231–257 (YVNPEGPNGNPDPIAAARDIRETFRRM) form a cross-link, tryptophyl-tyrosyl-methioninium (Tyr-Met) (with W-108). His272 is a heme b binding site.

It belongs to the peroxidase family. Peroxidase/catalase subfamily. As to quaternary structure, homodimer. It depends on heme b as a cofactor. In terms of processing, formation of the three residue Trp-Tyr-Met cross-link is important for the catalase, but not the peroxidase activity of the enzyme.

The enzyme catalyses H2O2 + AH2 = A + 2 H2O. The catalysed reaction is 2 H2O2 = O2 + 2 H2O. Bifunctional enzyme with both catalase and broad-spectrum peroxidase activity. The chain is Catalase-peroxidase from Streptomyces coelicolor (strain ATCC BAA-471 / A3(2) / M145).